The following is a 509-amino-acid chain: Heat shock 70 kDa protein 14 (509 aa).

The protein belongs to the heat shock protein 70 family. In terms of assembly, component of ribosome-associated complex (RAC), a heterodimer composed of Hsp70/DnaK-type chaperone HSPA14 and Hsp40/DnaJ-type chaperone DNAJC2.

Its subcellular location is the cytoplasm. The protein resides in the cytosol. Its function is as follows. Component of the ribosome-associated complex (RAC), a complex involved in folding or maintaining nascent polypeptides in a folding-competent state. In the RAC complex, binds to the nascent polypeptide chain, while DNAJC2 stimulates its ATPase activity. The chain is Heat shock 70 kDa protein 14 (Hspa14) from Rattus norvegicus (Rat).